Reading from the N-terminus, the 856-residue chain is DNA mismatch repair protein MutS (856 aa).

618–625 (GPNMGGKS) is a binding site for ATP.

The protein belongs to the DNA mismatch repair MutS family.

In terms of biological role, this protein is involved in the repair of mismatches in DNA. It is possible that it carries out the mismatch recognition step. This protein has a weak ATPase activity. The sequence is that of DNA mismatch repair protein MutS from Shewanella baltica (strain OS223).